The primary structure comprises 111 residues: Large ribosomal subunit protein bL20c (111 aa).

It belongs to the bacterial ribosomal protein bL20 family.

Its subcellular location is the plastid. The protein resides in the chloroplast. Binds directly to 23S ribosomal RNA and is necessary for the in vitro assembly process of the 50S ribosomal subunit. It is not involved in the protein synthesizing functions of that subunit. This Ostreococcus tauri protein is Large ribosomal subunit protein bL20c.